The sequence spans 638 residues: 1-deoxy-D-xylulose-5-phosphate synthase (638 aa).

Thiamine diphosphate contacts are provided by residues histidine 76 and 117–119 (AHS). Aspartate 148 contacts Mg(2+). Residues 149–150 (GS), asparagine 177, tyrosine 287, and glutamate 369 each bind thiamine diphosphate. A Mg(2+)-binding site is contributed by asparagine 177.

The protein belongs to the transketolase family. DXPS subfamily. Homodimer. Requires Mg(2+) as cofactor. It depends on thiamine diphosphate as a cofactor.

It catalyses the reaction D-glyceraldehyde 3-phosphate + pyruvate + H(+) = 1-deoxy-D-xylulose 5-phosphate + CO2. The protein operates within metabolic intermediate biosynthesis; 1-deoxy-D-xylulose 5-phosphate biosynthesis; 1-deoxy-D-xylulose 5-phosphate from D-glyceraldehyde 3-phosphate and pyruvate: step 1/1. Catalyzes the acyloin condensation reaction between C atoms 2 and 3 of pyruvate and glyceraldehyde 3-phosphate to yield 1-deoxy-D-xylulose-5-phosphate (DXP). This Rhodopseudomonas palustris (strain BisB5) protein is 1-deoxy-D-xylulose-5-phosphate synthase.